The primary structure comprises 228 residues: Leucyl/phenylalanyl-tRNA--protein transferase (228 aa).

This sequence belongs to the L/F-transferase family.

It is found in the cytoplasm. The catalysed reaction is N-terminal L-lysyl-[protein] + L-leucyl-tRNA(Leu) = N-terminal L-leucyl-L-lysyl-[protein] + tRNA(Leu) + H(+). It carries out the reaction N-terminal L-arginyl-[protein] + L-leucyl-tRNA(Leu) = N-terminal L-leucyl-L-arginyl-[protein] + tRNA(Leu) + H(+). The enzyme catalyses L-phenylalanyl-tRNA(Phe) + an N-terminal L-alpha-aminoacyl-[protein] = an N-terminal L-phenylalanyl-L-alpha-aminoacyl-[protein] + tRNA(Phe). In terms of biological role, functions in the N-end rule pathway of protein degradation where it conjugates Leu, Phe and, less efficiently, Met from aminoacyl-tRNAs to the N-termini of proteins containing an N-terminal arginine or lysine. The polypeptide is Leucyl/phenylalanyl-tRNA--protein transferase (Sulfurimonas denitrificans (strain ATCC 33889 / DSM 1251) (Thiomicrospira denitrificans (strain ATCC 33889 / DSM 1251))).